Reading from the N-terminus, the 66-residue chain is Clarkitoxin-1 (66 aa).

Intrachain disulfides connect C3/C24, C17/C42, C46/C59, and C60/C65.

As to expression, expressed by the venom gland.

Its subcellular location is the secreted. In terms of biological role, not toxic to mice when injected intravenously or intraperitoneally. The protein is Clarkitoxin-1 of Micrurus clarki (Clark's coral snake).